The following is a 398-amino-acid chain: Phosphoglycerate kinase (398 aa).

Residues 21–23 (DFN), Arg36, 59–62 (HLGR), Arg119, and Arg157 each bind substrate. ATP contacts are provided by residues Lys208, Gly296, Glu327, and 354–357 (GGDS).

Belongs to the phosphoglycerate kinase family. Monomer.

The protein resides in the cytoplasm. The catalysed reaction is (2R)-3-phosphoglycerate + ATP = (2R)-3-phospho-glyceroyl phosphate + ADP. The protein operates within carbohydrate degradation; glycolysis; pyruvate from D-glyceraldehyde 3-phosphate: step 2/5. The chain is Phosphoglycerate kinase from Streptococcus pneumoniae (strain Taiwan19F-14).